Consider the following 241-residue polypeptide: Carboxysome assembly protein CcmN (241 aa).

Residues 123–206 form a disordered region; the sequence is GASSPTTDSV…PTAPTVVTTA (84 aa). Polar residues predominate over residues 185-195; sequence QISSNRSPGES. The segment covering 196-206 has biased composition (low complexity); that stretch reads TPTAPTVVTTA. Positions 219–241 match the Encapsulation peptide motif; the sequence is VVGQVYINQLLLTLFPERRYFSS.

Belongs to the CcmN family. In terms of assembly, interacts with full-length and the N-terminal 249 residues of CcmM; a probable CcmM-CcaA-CcmN complex can also be isolated. Interacts with CcmK.

Its subcellular location is the carboxysome. In terms of biological role, required for carboxysome formation; the N-terminus interacts with CcmM which itself binds RuBisCO (ribulose bisphosphate carboxylase, rbcL-rbcS). May also contact shell protein CcmK to help assemble the carboxysome. Functionally, beta-carboxysome assembly initiates when soluble RuBisCO is condensed into a liquid matrix in a pre-carboxysome by the RbcS-like domains of probably both forms of CcmM. CcmN interacts with the N-terminus of full-length CcmM, and then recruits the CcmK major shell protein via CcmN's encapsulation peptide. Shell formation requires CcmK proteins and CcmO. CcmL caps the otherwise elongated carboxysome. Once fully encapsulated carboxysomes are formed, they migrate within the cell probably via interactions with the cytoskeleton. The sequence is that of Carboxysome assembly protein CcmN from Synechocystis sp. (strain ATCC 27184 / PCC 6803 / Kazusa).